The sequence spans 204 residues: Small ribosomal subunit protein uS4 (204 aa).

Positions 92–153 constitute an S4 RNA-binding domain; sequence RRLDALVLRS…RSKEKTLFTI (62 aa).

This sequence belongs to the universal ribosomal protein uS4 family. In terms of assembly, part of the 30S ribosomal subunit. Contacts protein S5. The interaction surface between S4 and S5 is involved in control of translational fidelity.

One of the primary rRNA binding proteins, it binds directly to 16S rRNA where it nucleates assembly of the body of the 30S subunit. In terms of biological role, with S5 and S12 plays an important role in translational accuracy. In Streptomyces coelicolor (strain ATCC BAA-471 / A3(2) / M145), this protein is Small ribosomal subunit protein uS4.